Here is a 181-residue protein sequence, read N- to C-terminus: Adenylyl-sulfate kinase (181 aa).

20-27 (GLSGAGKS) provides a ligand contact to ATP. The active-site Phosphoserine intermediate is the serine 94.

This sequence belongs to the APS kinase family.

The catalysed reaction is adenosine 5'-phosphosulfate + ATP = 3'-phosphoadenylyl sulfate + ADP + H(+). It participates in sulfur metabolism; hydrogen sulfide biosynthesis; sulfite from sulfate: step 2/3. Functionally, catalyzes the synthesis of activated sulfate. The chain is Adenylyl-sulfate kinase from Deinococcus deserti (strain DSM 17065 / CIP 109153 / LMG 22923 / VCD115).